Reading from the N-terminus, the 179-residue chain is Cytochrome b6-f complex iron-sulfur subunit (179 aa).

Residues 21-43 (LLTFGTVTGVALGALYPVVKYFI) form a helical membrane-spanning segment. The Rieske domain maps to 61–162 (GNDVSLSKFL…ANTVDDKIIL (102 aa)). 4 residues coordinate [2Fe-2S] cluster: Cys-108, His-110, Cys-126, and His-129. Cys-113 and Cys-128 are disulfide-bonded.

It belongs to the Rieske iron-sulfur protein family. As to quaternary structure, the 4 large subunits of the cytochrome b6-f complex are cytochrome b6, subunit IV (17 kDa polypeptide, PetD), cytochrome f and the Rieske protein, while the 4 small subunits are PetG, PetL, PetM and PetN. The complex functions as a dimer. Requires [2Fe-2S] cluster as cofactor.

It localises to the cellular thylakoid membrane. It carries out the reaction 2 oxidized [plastocyanin] + a plastoquinol + 2 H(+)(in) = 2 reduced [plastocyanin] + a plastoquinone + 4 H(+)(out). In terms of biological role, component of the cytochrome b6-f complex, which mediates electron transfer between photosystem II (PSII) and photosystem I (PSI), cyclic electron flow around PSI, and state transitions. This Desmonostoc sp. (strain PCC 7906) (Nostoc sp. (strain PCC 7906)) protein is Cytochrome b6-f complex iron-sulfur subunit.